Here is a 23-residue protein sequence, read N- to C-terminus: Paralytic peptide 1 (23 aa).

A disulfide bridge links Cys7 with Cys19.

It belongs to the GBP/PSP1/paralytic peptide family. As to expression, hemolymph.

Causes rapid, rigid paralysis when injected into Lepidopteran larvae. The physiological role may be to reduce hemolymph loss following injury and promote wound healing. This Heliothis virescens (Tobacco budworm moth) protein is Paralytic peptide 1.